The primary structure comprises 24 residues: Defensin D6 (24 aa).

Belongs to the DEFL family. Group IV subfamily. In terms of tissue distribution, distributed in the epidermal cell layer of leaves and in the subepidermal layer region of stems. Not in roots.

The protein localises to the secreted. It localises to the cell wall. In terms of biological role, antimicrobial peptide. Active against Fusarium spp., Gram-positive and Gram-negative bacterial pathogens. In Spinacia oleracea (Spinach), this protein is Defensin D6.